The primary structure comprises 224 residues: Pyridoxal 5'-phosphate synthase subunit SNO1 (224 aa).

67–69 is a binding site for L-glutamine; it reads GES. The Nucleophile role is filled by Cys100. L-glutamine-binding positions include Arg129 and 160–161; that span reads IR. Catalysis depends on charge relay system residues His203 and Glu205.

This sequence belongs to the glutaminase PdxT/SNO family.

It catalyses the reaction aldehydo-D-ribose 5-phosphate + D-glyceraldehyde 3-phosphate + L-glutamine = pyridoxal 5'-phosphate + L-glutamate + phosphate + 3 H2O + H(+). It carries out the reaction L-glutamine + H2O = L-glutamate + NH4(+). It functions in the pathway cofactor biosynthesis; pyridoxal 5'-phosphate biosynthesis. Its function is as follows. Catalyzes the hydrolysis of glutamine to glutamate and ammonia as part of the biosynthesis of pyridoxal 5'-phosphate. The resulting ammonia molecule is channeled to the active site of a SNZ isoform. The chain is Pyridoxal 5'-phosphate synthase subunit SNO1 (SNO1) from Saccharomyces cerevisiae (strain ATCC 204508 / S288c) (Baker's yeast).